Consider the following 179-residue polypeptide: Large ribosomal subunit protein uL6 (179 aa).

This sequence belongs to the universal ribosomal protein uL6 family. Part of the 50S ribosomal subunit.

Functionally, this protein binds to the 23S rRNA, and is important in its secondary structure. It is located near the subunit interface in the base of the L7/L12 stalk, and near the tRNA binding site of the peptidyltransferase center. This chain is Large ribosomal subunit protein uL6, found in Treponema pallidum (strain Nichols).